Here is a 324-residue protein sequence, read N- to C-terminus: DNA-directed RNA polymerase subunit alpha (324 aa).

Residues 1–228 (MIEIQKPTIR…EHFNLFTDLS (228 aa)) are alpha N-terminal domain (alpha-NTD). An alpha C-terminal domain (alpha-CTD) region spans residues 245–324 (RNKLLDMTIE…STPKGEEEEK (80 aa)).

The protein belongs to the RNA polymerase alpha chain family. In terms of assembly, homodimer. The RNAP catalytic core consists of 2 alpha, 1 beta, 1 beta' and 1 omega subunit. When a sigma factor is associated with the core the holoenzyme is formed, which can initiate transcription.

The catalysed reaction is RNA(n) + a ribonucleoside 5'-triphosphate = RNA(n+1) + diphosphate. Its function is as follows. DNA-dependent RNA polymerase catalyzes the transcription of DNA into RNA using the four ribonucleoside triphosphates as substrates. The protein is DNA-directed RNA polymerase subunit alpha of Caldicellulosiruptor saccharolyticus (strain ATCC 43494 / DSM 8903 / Tp8T 6331).